Here is a 461-residue protein sequence, read N- to C-terminus: GTPase Der (461 aa).

2 consecutive EngA-type G domains span residues 9 to 171 (KTIA…DLNQ) and 200 to 371 (IQVG…ECFS). GTP is bound by residues 15–22 (GQPNVGKS), 62–66 (DTGGM), 123–126 (NKID), 206–213 (GRVNVGKS), 253–257 (DTAGI), and 317–320 (NKWD). One can recognise a KH-like domain in the interval 372–456 (KRIPTSLLNS…PLILNAKDKK (85 aa)).

This sequence belongs to the TRAFAC class TrmE-Era-EngA-EngB-Septin-like GTPase superfamily. EngA (Der) GTPase family. In terms of assembly, associates with the 50S ribosomal subunit.

GTPase that plays an essential role in the late steps of ribosome biogenesis. The protein is GTPase Der of Helicobacter pylori (strain Shi470).